A 195-amino-acid chain; its full sequence is dITP/XTP pyrophosphatase (195 aa).

9–14 is a substrate binding site; it reads TNNQGK. The Mg(2+) site is built by Glu-39 and Asp-68. Asp-68 acts as the Proton acceptor in catalysis. Substrate-binding positions include Ser-69, 146–149, Lys-169, and 174–175; these read FGYD and HR.

It belongs to the HAM1 NTPase family. Homodimer. Requires Mg(2+) as cofactor.

It catalyses the reaction XTP + H2O = XMP + diphosphate + H(+). It carries out the reaction dITP + H2O = dIMP + diphosphate + H(+). The enzyme catalyses ITP + H2O = IMP + diphosphate + H(+). In terms of biological role, pyrophosphatase that catalyzes the hydrolysis of nucleoside triphosphates to their monophosphate derivatives, with a high preference for the non-canonical purine nucleotides XTP (xanthosine triphosphate), dITP (deoxyinosine triphosphate) and ITP. Seems to function as a house-cleaning enzyme that removes non-canonical purine nucleotides from the nucleotide pool, thus preventing their incorporation into DNA/RNA and avoiding chromosomal lesions. This Gloeobacter violaceus (strain ATCC 29082 / PCC 7421) protein is dITP/XTP pyrophosphatase.